A 354-amino-acid chain; its full sequence is Glycerol-1-phosphate dehydrogenase [NAD(P)+] (354 aa).

Residues 103 to 107 (GRSVD) and 125 to 128 (TAAS) each bind NAD(+). Residue Asp130 participates in substrate binding. Ser134 serves as a coordination point for NAD(+). Asp176 contacts substrate. Residues Asp176 and His255 each contribute to the Zn(2+) site. Residue His259 coordinates substrate. Residue His271 coordinates Zn(2+).

This sequence belongs to the glycerol-1-phosphate dehydrogenase family. In terms of assembly, homodimer. Zn(2+) is required as a cofactor.

Its subcellular location is the cytoplasm. The enzyme catalyses sn-glycerol 1-phosphate + NAD(+) = dihydroxyacetone phosphate + NADH + H(+). It carries out the reaction sn-glycerol 1-phosphate + NADP(+) = dihydroxyacetone phosphate + NADPH + H(+). Its pathway is membrane lipid metabolism; glycerophospholipid metabolism. In terms of biological role, catalyzes the NAD(P)H-dependent reduction of dihydroxyacetonephosphate (DHAP or glycerone phosphate) to glycerol 1-phosphate (G1P). The G1P thus generated is used as the glycerophosphate backbone of phospholipids in the cellular membranes of Archaea. This Nitrosopumilus maritimus (strain SCM1) protein is Glycerol-1-phosphate dehydrogenase [NAD(P)+].